We begin with the raw amino-acid sequence, 235 residues long: Large ribosomal subunit protein uL1 (235 aa).

The protein belongs to the universal ribosomal protein uL1 family. Part of the 50S ribosomal subunit.

Functionally, binds directly to 23S rRNA. The L1 stalk is quite mobile in the ribosome, and is involved in E site tRNA release. Protein L1 is also a translational repressor protein, it controls the translation of the L11 operon by binding to its mRNA. This is Large ribosomal subunit protein uL1 from Synechococcus sp. (strain CC9311).